The sequence spans 505 residues: Catalase (505 aa).

Residues His56 and Asn129 contribute to the active site. Tyr339 serves as a coordination point for heme.

The protein belongs to the catalase family. It depends on heme as a cofactor.

It is found in the cytoplasm. It carries out the reaction 2 H2O2 = O2 + 2 H2O. Decomposes hydrogen peroxide into water and oxygen; serves to protect cells from the toxic effects of hydrogen peroxide. This chain is Catalase (katA), found in Helicobacter pylori (strain J99 / ATCC 700824) (Campylobacter pylori J99).